Reading from the N-terminus, the 148-residue chain is NTR domain-containing protein (148 aa).

The N-terminal stretch at 1–26 is a signal peptide; it reads MVCRFSYVQVVLILVVLSVIISWANA. Intrachain disulfides connect Cys27–Cys96, Cys29–Cys122, and Cys40–Cys146. Residues 27–146 form the NTR domain; the sequence is CSCFPPDETR…LQLFNDPQWC (120 aa).

In terms of tissue distribution, prismatic layer of shell (at protein level). Expressed primarily in the mantle with highest level in the mantle edge and lower level in the mantle pallium.

The protein resides in the secreted. The protein is NTR domain-containing protein of Margaritifera margaritifera (Freshwater pearl mussel).